Reading from the N-terminus, the 375-residue chain is Cobalt-precorrin-5B C(1)-methyltransferase (375 aa).

This sequence belongs to the CbiD family.

It carries out the reaction Co-precorrin-5B + S-adenosyl-L-methionine = Co-precorrin-6A + S-adenosyl-L-homocysteine. It participates in cofactor biosynthesis; adenosylcobalamin biosynthesis; cob(II)yrinate a,c-diamide from sirohydrochlorin (anaerobic route): step 6/10. Its function is as follows. Catalyzes the methylation of C-1 in cobalt-precorrin-5B to form cobalt-precorrin-6A. The chain is Cobalt-precorrin-5B C(1)-methyltransferase from Fusobacterium nucleatum subsp. nucleatum (strain ATCC 25586 / DSM 15643 / BCRC 10681 / CIP 101130 / JCM 8532 / KCTC 2640 / LMG 13131 / VPI 4355).